We begin with the raw amino-acid sequence, 854 residues long: DNA mismatch repair protein MutS (854 aa).

Residue 615–622 participates in ATP binding; sequence GPNMGGKS.

Belongs to the DNA mismatch repair MutS family.

In terms of biological role, this protein is involved in the repair of mismatches in DNA. It is possible that it carries out the mismatch recognition step. This protein has a weak ATPase activity. The sequence is that of DNA mismatch repair protein MutS from Aliivibrio fischeri (strain MJ11) (Vibrio fischeri).